The following is a 270-amino-acid chain: Tryptophan synthase alpha chain (270 aa).

Residues Glu-49 and Asp-60 each act as proton acceptor in the active site.

It belongs to the TrpA family. As to quaternary structure, tetramer of two alpha and two beta chains.

It carries out the reaction (1S,2R)-1-C-(indol-3-yl)glycerol 3-phosphate + L-serine = D-glyceraldehyde 3-phosphate + L-tryptophan + H2O. The protein operates within amino-acid biosynthesis; L-tryptophan biosynthesis; L-tryptophan from chorismate: step 5/5. The alpha subunit is responsible for the aldol cleavage of indoleglycerol phosphate to indole and glyceraldehyde 3-phosphate. This is Tryptophan synthase alpha chain from Pseudomonas fluorescens (strain Pf0-1).